Consider the following 837-residue polypeptide: Outer membrane usher protein HifC (837 aa).

Residues 1-26 form the signal peptide; sequence MKTKNFPLNKIAFACTLLLANPVAWA. Cysteine 813 and cysteine 833 form a disulfide bridge.

It belongs to the fimbrial export usher family.

It localises to the cell outer membrane. Functionally, essential for piliation. This chain is Outer membrane usher protein HifC (hifC), found in Haemophilus influenzae.